The sequence spans 142 residues: Alpha-lactalbumin (142 aa).

Residues 1-18 form the signal peptide; it reads MMSFVSLLLVGILFHATQ. Positions 20–142 constitute a C-type lysozyme domain; the sequence is EQLTKCEVFR…KLDQWLCEKL (123 aa). 4 cysteine pairs are disulfide-bonded: C25-C139, C47-C130, C80-C96, and C92-C110. N64 and N93 each carry an N-linked (GlcNAc...) asparagine glycan. The Ca(2+) site is built by K98, D101, D103, D106, and D107.

Belongs to the glycosyl hydrolase 22 family. In terms of assembly, lactose synthase (LS) is a heterodimer of a catalytic component, beta1,4-galactosyltransferase (beta4Gal-T1) and a regulatory component, alpha-lactalbumin (LA). Mammary gland specific. Secreted in milk.

It is found in the secreted. Functionally, regulatory subunit of lactose synthase, changes the substrate specificity of galactosyltransferase in the mammary gland making glucose a good acceptor substrate for this enzyme. This enables LS to synthesize lactose, the major carbohydrate component of milk. In other tissues, galactosyltransferase transfers galactose onto the N-acetylglucosamine of the oligosaccharide chains in glycoproteins. The protein is Alpha-lactalbumin (LALBA) of Bubalus bubalis (Domestic water buffalo).